The sequence spans 414 residues: CinA-like protein (414 aa).

Belongs to the CinA family.

In Citrifermentans bemidjiense (strain ATCC BAA-1014 / DSM 16622 / JCM 12645 / Bem) (Geobacter bemidjiensis), this protein is CinA-like protein.